The chain runs to 80 residues: LSM complex subunit lsm5 (80 aa).

The Sm domain occupies 6-79 (LPLELIDKCI…MCMLIPGGKP (74 aa)).

Belongs to the snRNP Sm proteins family. Component of the heptameric LSM1-LSM7 complex that forms a seven-membered ring structure with a donut shape. The LSm subunits are arranged in the order lsm1, lsm2, lsm3, lsm6, lsm5, lsm7 and lsm4. Component of the heptameric LSM2-LSM8 complex that forms a seven-membered ring structure with a donut shape. The LSm subunits are arranged in the order lsm8, lsm2, lsm3, lsm6, lsm5, lsm7 and lsm4.

The protein resides in the nucleus. Functionally, component of LSm protein complexes, which are involved in RNA processing and may function in a chaperone-like manner. Component of the cytoplasmic LSM1-LSM7 complex which is involved in mRNA degradation by activating the decapping step. The LSM1-LSM7 complex loads onto the 3'-end of single stranded RNA. Component of the nuclear LSM2-LSM8 complex, which is involved in spliceosome assembly. The LSM2-LSM8 complex plays a role in the biogenesis of the spliceosomal U4/U6-U5 tri-snRNP complex by accelerating prp24-mediated annealing of U4/U6 di-snRNA. The LSM2-LSM8 complex binds U6 snRNA terminating with a cyclic 2',3' phosphate group; RNA with an unmodified 3' hydroxyl or non-cyclic 3' phosphate is bound less tightly. This is LSM complex subunit lsm5 (lsm5) from Schizosaccharomyces pombe (strain 972 / ATCC 24843) (Fission yeast).